The chain runs to 662 residues: Leucine aminopeptidase 2 (662 aa).

A peptide contacts are provided by residues Gln-178–Glu-180 and Pro-304–Glu-309. His-333 serves as a coordination point for Zn(2+). Glu-334 (proton acceptor) is an active-site residue. Positions 337 and 356 each coordinate Zn(2+). Residue Tyr-422 is the Proton donor of the active site.

The protein belongs to the peptidase M1 family. The cofactor is Zn(2+).

It localises to the cytoplasm. The protein resides in the nucleus. The catalysed reaction is an epoxide + H2O = an ethanediol. In terms of biological role, aminopeptidase that preferentially cleaves di- and tripeptides. Also has low epoxide hydrolase activity (in vitro). Can hydrolyze the epoxide leukotriene LTA(4) but it forms preferentially 5,6-dihydroxy-7,9,11,14-eicosatetraenoic acid rather than the cytokine leukotriene B(4) as the product compared to the homologous mammalian enzyme (in vitro). The sequence is that of Leucine aminopeptidase 2 from Kluyveromyces lactis (strain ATCC 8585 / CBS 2359 / DSM 70799 / NBRC 1267 / NRRL Y-1140 / WM37) (Yeast).